Here is a 588-residue protein sequence, read N- to C-terminus: Glutamyl-tRNA(Gln) amidotransferase subunit B, mitochondrial (588 aa).

The N-terminal 109 residues, 1-109 (MLRSWIGSGT…RAPTSTSETP (109 aa)), are a transit peptide targeting the mitochondrion. Residues 22 to 35 (SSLPSPKASFSSAP) are compositionally biased toward low complexity. Positions 22 to 50 (SSLPSPKASFSSAPNRYLQPPTSADRVPL) are disordered.

It belongs to the GatB/GatE family. GatB subfamily. In terms of assembly, subunit of the heterotrimeric GatCAB amidotransferase (AdT) complex, composed of A, B and C subunits.

Its subcellular location is the mitochondrion. The catalysed reaction is L-glutamyl-tRNA(Gln) + L-glutamine + ATP + H2O = L-glutaminyl-tRNA(Gln) + L-glutamate + ADP + phosphate + H(+). In terms of biological role, allows the formation of correctly charged Gln-tRNA(Gln) through the transamidation of misacylated Glu-tRNA(Gln) in the mitochondria. The reaction takes place in the presence of glutamine and ATP through an activated gamma-phospho-Glu-tRNA(Gln). This is Glutamyl-tRNA(Gln) amidotransferase subunit B, mitochondrial from Penicillium rubens (strain ATCC 28089 / DSM 1075 / NRRL 1951 / Wisconsin 54-1255) (Penicillium chrysogenum).